Here is a 456-residue protein sequence, read N- to C-terminus: MPQNTLNIVILAAGKGTRMYSKMPKVLHEIGGETMLGRVIDTAAALNPQNICVVVGHGKEQVLDTVKRDVVWVEQTEQLGTGHAVKTALPHLAAEGRTLVLYGDVPLIDVETLETLLEAAGNEVGLLTDVPADPSGLGRIIRDSSGSVTAIVEEKDADAAQKAVKEINTGILVLPNAKLEAWLNSLSSNNAQGEYYLTDLIAKAVADGIKIHPVQVRSSHLAAGVNNKLQLAELERIFQTEQAQELLKAGVTLRDPARFDLRGRLKHGQDVVIDVNCIFEGKIELGDNVEIGANCVIKNAKIGANSKIAPFSHLEGCEVGENNQIGPYARLRPQAKLADDVHVGNFVEIKNAAIGKGTKANHLTYIGDAEVGSKTNFGAGTIIANYDGVHKHKTVIGDEVRIGSNCVLVSPVKIGNKVTTGAGSTITRNVEDGKLALARSRQTIIDGWVRPEKNKQ.

The interval 1–228 (MPQNTLNIVI…SHLAAGVNNK (228 aa)) is pyrophosphorylase. UDP-N-acetyl-alpha-D-glucosamine-binding positions include 11–14 (LAAG), K25, Q75, 80–81 (GT), 102–104 (YGD), G138, E153, N168, and N226. Residue D104 coordinates Mg(2+). N226 contributes to the Mg(2+) binding site. The interval 229 to 249 (LQLAELERIFQTEQAQELLKA) is linker. Residues 250–456 (GVTLRDPARF…GWVRPEKNKQ (207 aa)) are N-acetyltransferase. The UDP-N-acetyl-alpha-D-glucosamine site is built by R332 and K350. H362 functions as the Proton acceptor in the catalytic mechanism. UDP-N-acetyl-alpha-D-glucosamine contacts are provided by Y365 and N376. Acetyl-CoA contacts are provided by residues A379, 385 to 386 (NY), S404, A422, and R439.

The protein in the N-terminal section; belongs to the N-acetylglucosamine-1-phosphate uridyltransferase family. This sequence in the C-terminal section; belongs to the transferase hexapeptide repeat family. As to quaternary structure, homotrimer. The cofactor is Mg(2+).

It is found in the cytoplasm. It carries out the reaction alpha-D-glucosamine 1-phosphate + acetyl-CoA = N-acetyl-alpha-D-glucosamine 1-phosphate + CoA + H(+). The enzyme catalyses N-acetyl-alpha-D-glucosamine 1-phosphate + UTP + H(+) = UDP-N-acetyl-alpha-D-glucosamine + diphosphate. It participates in nucleotide-sugar biosynthesis; UDP-N-acetyl-alpha-D-glucosamine biosynthesis; N-acetyl-alpha-D-glucosamine 1-phosphate from alpha-D-glucosamine 6-phosphate (route II): step 2/2. Its pathway is nucleotide-sugar biosynthesis; UDP-N-acetyl-alpha-D-glucosamine biosynthesis; UDP-N-acetyl-alpha-D-glucosamine from N-acetyl-alpha-D-glucosamine 1-phosphate: step 1/1. The protein operates within bacterial outer membrane biogenesis; LPS lipid A biosynthesis. Catalyzes the last two sequential reactions in the de novo biosynthetic pathway for UDP-N-acetylglucosamine (UDP-GlcNAc). The C-terminal domain catalyzes the transfer of acetyl group from acetyl coenzyme A to glucosamine-1-phosphate (GlcN-1-P) to produce N-acetylglucosamine-1-phosphate (GlcNAc-1-P), which is converted into UDP-GlcNAc by the transfer of uridine 5-monophosphate (from uridine 5-triphosphate), a reaction catalyzed by the N-terminal domain. The chain is Bifunctional protein GlmU from Neisseria meningitidis serogroup A / serotype 4A (strain DSM 15465 / Z2491).